The following is a 260-amino-acid chain: Probable carbohydrate esterase At4g34215 (260 aa).

The segment at 1–22 (MEGGSITPGEDKPEIQSPIPPN) is disordered. Catalysis depends on residues serine 31, aspartate 235, and histidine 238.

It belongs to the carbohydrate esterase 6 family.

The protein is Probable carbohydrate esterase At4g34215 of Arabidopsis thaliana (Mouse-ear cress).